Reading from the N-terminus, the 160-residue chain is Cyclic pyranopterin monophosphate synthase (160 aa).

Residues 74-76 and 112-113 each bind substrate; these read LSH and ME. Residue Asp127 is part of the active site.

This sequence belongs to the MoaC family. In terms of assembly, homohexamer; trimer of dimers.

The enzyme catalyses (8S)-3',8-cyclo-7,8-dihydroguanosine 5'-triphosphate = cyclic pyranopterin phosphate + diphosphate. It participates in cofactor biosynthesis; molybdopterin biosynthesis. Catalyzes the conversion of (8S)-3',8-cyclo-7,8-dihydroguanosine 5'-triphosphate to cyclic pyranopterin monophosphate (cPMP). The chain is Cyclic pyranopterin monophosphate synthase from Geotalea uraniireducens (strain Rf4) (Geobacter uraniireducens).